The chain runs to 540 residues: Synaptotagmin-3 (540 aa).

The helical transmembrane segment at 9 to 29 (GIIGFVIGIPIGLILGFFVLI) threads the bilayer. In terms of domain architecture, SMP-LTD spans 67-249 (DYERVDWFNK…WPQVLEIPIL (183 aa)). Positions 227–509 (QETIKRQVSS…ELGHVDINLD (283 aa)) are phospholipid binding. C2 domains follow at residues 240 to 363 (WPQV…EFNL) and 401 to 521 (RKES…NQKY). The Ca(2+) site is built by Asp277, Asp283, Asp333, Asp335, and Asp341.

The protein belongs to the synaptotagmin family. It depends on Ca(2+) as a cofactor.

The protein resides in the membrane. Its function is as follows. May be involved in membrane trafficking. In Arabidopsis thaliana (Mouse-ear cress), this protein is Synaptotagmin-3 (SYT3).